We begin with the raw amino-acid sequence, 169 residues long: Peptide methionine sulfoxide reductase MsrA (169 aa).

The active site involves C10.

This sequence belongs to the MsrA Met sulfoxide reductase family.

The enzyme catalyses L-methionyl-[protein] + [thioredoxin]-disulfide + H2O = L-methionyl-(S)-S-oxide-[protein] + [thioredoxin]-dithiol. The catalysed reaction is [thioredoxin]-disulfide + L-methionine + H2O = L-methionine (S)-S-oxide + [thioredoxin]-dithiol. Functionally, has an important function as a repair enzyme for proteins that have been inactivated by oxidation. Catalyzes the reversible oxidation-reduction of methionine sulfoxide in proteins to methionine. The sequence is that of Peptide methionine sulfoxide reductase MsrA from Streptococcus pyogenes serotype M28 (strain MGAS6180).